The chain runs to 222 residues: 3,4-dihydroxy-2-butanone 4-phosphate synthase (222 aa).

Residues 37 to 38 (RE), Asp42, 150 to 154 (RPGHT), and Glu174 each bind D-ribulose 5-phosphate. Glu38 contacts Mg(2+). His153 serves as a coordination point for Mg(2+).

This sequence belongs to the DHBP synthase family. Homodimer. Requires Mg(2+) as cofactor. The cofactor is Mn(2+).

It carries out the reaction D-ribulose 5-phosphate = (2S)-2-hydroxy-3-oxobutyl phosphate + formate + H(+). It functions in the pathway cofactor biosynthesis; riboflavin biosynthesis; 2-hydroxy-3-oxobutyl phosphate from D-ribulose 5-phosphate: step 1/1. Its function is as follows. Catalyzes the conversion of D-ribulose 5-phosphate to formate and 3,4-dihydroxy-2-butanone 4-phosphate. The protein is 3,4-dihydroxy-2-butanone 4-phosphate synthase of Chlorobium limicola (strain DSM 245 / NBRC 103803 / 6330).